Here is a 131-residue protein sequence, read N- to C-terminus: Small ribosomal subunit protein uS8 (131 aa).

This sequence belongs to the universal ribosomal protein uS8 family. As to quaternary structure, part of the 30S ribosomal subunit. Contacts proteins S5 and S12.

In terms of biological role, one of the primary rRNA binding proteins, it binds directly to 16S rRNA central domain where it helps coordinate assembly of the platform of the 30S subunit. This chain is Small ribosomal subunit protein uS8, found in Rhizorhabdus wittichii (strain DSM 6014 / CCUG 31198 / JCM 15750 / NBRC 105917 / EY 4224 / RW1) (Sphingomonas wittichii).